Here is a 203-residue protein sequence, read N- to C-terminus: Proteasome subunit beta 2 (203 aa).

Residues 1–9 (MGEEVQIGA) constitute a propeptide, removed in mature form; by autocatalysis. Thr10 acts as the Nucleophile in catalysis.

It belongs to the peptidase T1B family. In terms of assembly, the 20S proteasome core is composed of 14 alpha and 14 beta subunits that assemble into four stacked heptameric rings, resulting in a barrel-shaped structure. The two inner rings, each composed of seven catalytic beta subunits, are sandwiched by two outer rings, each composed of seven alpha subunits. The catalytic chamber with the active sites is on the inside of the barrel. Has a gated structure, the ends of the cylinder being occluded by the N-termini of the alpha-subunits. Is capped at one or both ends by the proteasome regulatory ATPase, PAN.

The protein resides in the cytoplasm. It carries out the reaction Cleavage of peptide bonds with very broad specificity.. With respect to regulation, the formation of the proteasomal ATPase PAN-20S proteasome complex, via the docking of the C-termini of PAN into the intersubunit pockets in the alpha-rings, triggers opening of the gate for substrate entry. Interconversion between the open-gate and close-gate conformations leads to a dynamic regulation of the 20S proteasome proteolysis activity. Component of the proteasome core, a large protease complex with broad specificity involved in protein degradation. This Pyrobaculum arsenaticum (strain DSM 13514 / JCM 11321 / PZ6) protein is Proteasome subunit beta 2.